The chain runs to 501 residues: L-arabinose isomerase (501 aa).

Positions 306, 333, 350, and 449 each coordinate Mn(2+).

Belongs to the arabinose isomerase family. Requires Mn(2+) as cofactor.

It catalyses the reaction beta-L-arabinopyranose = L-ribulose. Its pathway is carbohydrate degradation; L-arabinose degradation via L-ribulose; D-xylulose 5-phosphate from L-arabinose (bacterial route): step 1/3. Catalyzes the conversion of L-arabinose to L-ribulose. This chain is L-arabinose isomerase, found in Mycolicibacterium smegmatis (strain ATCC 700084 / mc(2)155) (Mycobacterium smegmatis).